A 461-amino-acid chain; its full sequence is Glutamate--tRNA ligase (461 aa).

The 'HIGH' region motif lies at 8–18 (PSPTGYLHIGG). The 'KMSKS' region signature appears at 240–244 (KMSKR). K243 lines the ATP pocket.

Belongs to the class-I aminoacyl-tRNA synthetase family. Glutamate--tRNA ligase type 1 subfamily. In terms of assembly, monomer.

The protein localises to the cytoplasm. It carries out the reaction tRNA(Glu) + L-glutamate + ATP = L-glutamyl-tRNA(Glu) + AMP + diphosphate. In terms of biological role, catalyzes the attachment of glutamate to tRNA(Glu) in a two-step reaction: glutamate is first activated by ATP to form Glu-AMP and then transferred to the acceptor end of tRNA(Glu). The chain is Glutamate--tRNA ligase from Chromobacterium violaceum (strain ATCC 12472 / DSM 30191 / JCM 1249 / CCUG 213 / NBRC 12614 / NCIMB 9131 / NCTC 9757 / MK).